Consider the following 179-residue polypeptide: Inner membrane-spanning protein YciB (179 aa).

A run of 5 helical transmembrane segments spans residues 24–44 (TATGVLMAATVLQMGIIYAME), 49–69 (AMQKATLVLILLFGTLTLVLH), 76–96 (WKPTVLYGAMAIALAVALWAL), 121–141 (VAWIGYCLFMAAINGYVAAYF), and 151–171 (LWGYVFPIVFLVAQGLYISPH).

The protein belongs to the YciB family.

The protein localises to the cell inner membrane. Its function is as follows. Plays a role in cell envelope biogenesis, maintenance of cell envelope integrity and membrane homeostasis. In Variovorax paradoxus (strain S110), this protein is Inner membrane-spanning protein YciB.